The chain runs to 263 residues: 4-hydroxy-2-oxo-heptane-1,7-dioate aldolase (263 aa).

The active-site Proton acceptor is His-45. Gln-147 serves as a coordination point for substrate. Glu-149 serves as a coordination point for a divalent metal cation. The substrate site is built by Ala-174 and Asp-175. Residue Asp-175 coordinates a divalent metal cation.

This sequence belongs to the HpcH/HpaI aldolase family. As to quaternary structure, homohexamer; trimer of dimers. The cofactor is a divalent metal cation.

The catalysed reaction is 4-hydroxy-2-oxoheptanedioate = succinate semialdehyde + pyruvate. Its pathway is aromatic compound metabolism; 4-hydroxyphenylacetate degradation; pyruvate and succinate semialdehyde from 4-hydroxyphenylacetate: step 7/7. Catalyzes the reversible retro-aldol cleavage of 4-hydroxy-2-ketoheptane-1,7-dioate (HKHD) to pyruvate and succinic semialdehyde. This Salmonella dublin (strain CT_02021853) protein is 4-hydroxy-2-oxo-heptane-1,7-dioate aldolase.